A 318-amino-acid chain; its full sequence is Mechanosensory protein 3 (318 aa).

2 LIM zinc-binding domains span residues 27 to 86 (NKCY…DYSA) and 87 to 152 (HRCA…PMDD). Positions 214–273 (RRGPRTTIRQNQLDVLNEMFSNTPKPSKHARAKLALETGLSMRVIQVWFQNRRSKERRLK) form a DNA-binding region, homeobox.

It localises to the nucleus. In terms of biological role, specifies differentiation of the set of six touch receptor neurons. Binds cooperatively as a heterodimer with unc-86 to sites in the mec-3 gene promoter. In Caenorhabditis briggsae, this protein is Mechanosensory protein 3 (mec-3).